Reading from the N-terminus, the 94-residue chain is Co-chaperonin GroES (94 aa).

The protein belongs to the GroES chaperonin family. As to quaternary structure, heptamer of 7 subunits arranged in a ring. Interacts with the chaperonin GroEL.

It is found in the cytoplasm. Together with the chaperonin GroEL, plays an essential role in assisting protein folding. The GroEL-GroES system forms a nano-cage that allows encapsulation of the non-native substrate proteins and provides a physical environment optimized to promote and accelerate protein folding. GroES binds to the apical surface of the GroEL ring, thereby capping the opening of the GroEL channel. This Streptococcus mitis protein is Co-chaperonin GroES.